The sequence spans 315 residues: Homoserine kinase (315 aa).

97–107 lines the ATP pocket; that stretch reads PPARGLGSSAT.

It belongs to the GHMP kinase family. Homoserine kinase subfamily.

Its subcellular location is the cytoplasm. The enzyme catalyses L-homoserine + ATP = O-phospho-L-homoserine + ADP + H(+). It participates in amino-acid biosynthesis; L-threonine biosynthesis; L-threonine from L-aspartate: step 4/5. Functionally, catalyzes the ATP-dependent phosphorylation of L-homoserine to L-homoserine phosphate. The polypeptide is Homoserine kinase (Prochlorococcus marinus (strain SARG / CCMP1375 / SS120)).